A 316-amino-acid polypeptide reads, in one-letter code: Thymidylate synthase (316 aa).

Residues R23 and 178–179 (RR) each bind dUMP. C198 acts as the Nucleophile in catalysis. Residues 218–221 (RSAD), N229, and 259–261 (HIY) each bind dUMP. D221 is a (6R)-5,10-methylene-5,6,7,8-tetrahydrofolate binding site. A315 lines the (6R)-5,10-methylene-5,6,7,8-tetrahydrofolate pocket.

The protein belongs to the thymidylate synthase family. Bacterial-type ThyA subfamily. Homodimer.

It is found in the cytoplasm. The enzyme catalyses dUMP + (6R)-5,10-methylene-5,6,7,8-tetrahydrofolate = 7,8-dihydrofolate + dTMP. The protein operates within pyrimidine metabolism; dTTP biosynthesis. Catalyzes the reductive methylation of 2'-deoxyuridine-5'-monophosphate (dUMP) to 2'-deoxythymidine-5'-monophosphate (dTMP) while utilizing 5,10-methylenetetrahydrofolate (mTHF) as the methyl donor and reductant in the reaction, yielding dihydrofolate (DHF) as a by-product. This enzymatic reaction provides an intracellular de novo source of dTMP, an essential precursor for DNA biosynthesis. The sequence is that of Thymidylate synthase from Levilactobacillus brevis (strain ATCC 367 / BCRC 12310 / CIP 105137 / JCM 1170 / LMG 11437 / NCIMB 947 / NCTC 947) (Lactobacillus brevis).